Here is a 435-residue protein sequence, read N- to C-terminus: Aspartate aminotransferase (435 aa).

Residues tyrosine 69 and 100-101 each bind pyridoxal 5'-phosphate; that span reads SL. 139–141 is a substrate binding site; the sequence is YDR. Residues asparagine 189, tyrosine 221, and 254–256 contribute to the pyridoxal 5'-phosphate site; that span reads STS. Arginine 392 is a substrate binding site.

This sequence belongs to the class-I pyridoxal-phosphate-dependent aminotransferase family. It depends on pyridoxal 5'-phosphate as a cofactor.

It carries out the reaction L-aspartate + 2-oxoglutarate = oxaloacetate + L-glutamate. Functionally, main aspartate aminotransferase that couples nitrogen assimilation to aspartate synthesis. Has a weak, but significant, side activity toward kynurenine (Kyn). Oxaloacetate and 2-oxoglutarate, but not pyruvate, serve as amino acceptors, while Asp, Glu and Kyn serve as the best amino donors. Essential for axenic growth and survival of M.tuberculosis in macrophages and in mice. In Mycobacterium tuberculosis (strain ATCC 25618 / H37Rv), this protein is Aspartate aminotransferase.